The chain runs to 614 residues: MSIPSDAKQLYAEFLQQEVNQSTSAHQEKLVMVLNRALFALKNYPDPIYHPKDLLKVKGIGQTTMNKLSKRLKTYCEENGYSFPEESSSTDNTQSTQNDSNPSNTQKTRVRTLEPEENESQGTRKRRKKKYIPRNRSGGYGILLGLLELGCDKDGTACTRRQLIAVASKYCDQSYEKNPSTKEFYSAWSAIKSLKTNDLVIEQGRPSQFSLTEAGTILADSLKTANNIEFDVSSVYERRLNRGNTQNSFTNDEHDHTVNFSGLMNHANMSINESANSSRLFLDATANSSRIEQNEEPEVSAEISTPIPKQKVSKGRWKGVKYELWKPDSYDIILHIDHREVRSKEDRGFFARKLLQRGIETESSSLTVGDMIWLAKHKQSGQQCALDFIVERKRLDDLVISIRDNRFSEQKNRLQKTGCKHIFYLVEETTGYNVSDSADMMKTSIWTTVIYNDFHIKRTRNADTTVQWLTDMSLIIKELYSRKSLVVINHDHITNQSIYLTSLKMFRTEFERNKEIECCHNYESMQSAMVKTNLMTVKELYLRALMSVKGISLEKALMIQSRYPTFKTLLKAYRRCAAEADAKTLIQNELKDAPGNRKIGKSLSHTLWETFGKL.

Residues 80 to 132 (GYSFPEESSSTDNTQSTQNDSNPSNTQKTRVRTLEPEENESQGTRKRRKKKYI) are disordered. The span at 87–101 (SSSTDNTQSTQNDSN) shows a compositional bias: low complexity. Basic residues predominate over residues 123 to 132 (TRKRRKKKYI). Residues 333-430 (ILHIDHREVR…HIFYLVEETT (98 aa)) enclose the ERCC4 domain.

The protein belongs to the XPF family. As to quaternary structure, interacts with EME1. Mg(2+) serves as cofactor.

Its subcellular location is the nucleus. Interacts with EME1 to form a DNA structure-specific endonuclease with substrate preference for branched DNA structures with a 5'-end at the branch nick. Typical substrates include 3'-flap structures, D-loops, replication forks and nicked Holliday junctions. May be required in mitosis for the processing of stalled or collapsed replication fork intermediates. May be required in meiosis for the repair of meiosis-specific double strand breaks subsequent to single-end invasion (SEI). The sequence is that of Crossover junction endonuclease MUS81 (MUS81) from Kluyveromyces lactis (strain ATCC 8585 / CBS 2359 / DSM 70799 / NBRC 1267 / NRRL Y-1140 / WM37) (Yeast).